Consider the following 454-residue polypeptide: Bifunctional protein GlmU (454 aa).

Residues 1–226 (MALNVVILAA…AVEVEGANNR (226 aa)) form a pyrophosphorylase region. Residues 8–11 (LAAG), lysine 22, glutamine 73, 78–79 (GT), 100–102 (YGD), glycine 137, glutamate 151, asparagine 166, and asparagine 224 contribute to the UDP-N-acetyl-alpha-D-glucosamine site. Aspartate 102 is a binding site for Mg(2+). Position 224 (asparagine 224) interacts with Mg(2+). Positions 227 to 247 (VQLAQLERAYQARAAEKLMLE) are linker. Positions 248-454 (GANLRDPARI…GWPRPVKLKK (207 aa)) are N-acetyltransferase. Residues arginine 330 and lysine 348 each contribute to the UDP-N-acetyl-alpha-D-glucosamine site. The active-site Proton acceptor is the histidine 360. Positions 363 and 374 each coordinate UDP-N-acetyl-alpha-D-glucosamine. Acetyl-CoA is bound by residues alanine 377, 383–384 (NY), serine 402, alanine 420, and arginine 437.

It in the N-terminal section; belongs to the N-acetylglucosamine-1-phosphate uridyltransferase family. This sequence in the C-terminal section; belongs to the transferase hexapeptide repeat family. In terms of assembly, homotrimer. It depends on Mg(2+) as a cofactor.

It localises to the cytoplasm. It catalyses the reaction alpha-D-glucosamine 1-phosphate + acetyl-CoA = N-acetyl-alpha-D-glucosamine 1-phosphate + CoA + H(+). The enzyme catalyses N-acetyl-alpha-D-glucosamine 1-phosphate + UTP + H(+) = UDP-N-acetyl-alpha-D-glucosamine + diphosphate. It functions in the pathway nucleotide-sugar biosynthesis; UDP-N-acetyl-alpha-D-glucosamine biosynthesis; N-acetyl-alpha-D-glucosamine 1-phosphate from alpha-D-glucosamine 6-phosphate (route II): step 2/2. The protein operates within nucleotide-sugar biosynthesis; UDP-N-acetyl-alpha-D-glucosamine biosynthesis; UDP-N-acetyl-alpha-D-glucosamine from N-acetyl-alpha-D-glucosamine 1-phosphate: step 1/1. Its pathway is bacterial outer membrane biogenesis; LPS lipid A biosynthesis. In terms of biological role, catalyzes the last two sequential reactions in the de novo biosynthetic pathway for UDP-N-acetylglucosamine (UDP-GlcNAc). The C-terminal domain catalyzes the transfer of acetyl group from acetyl coenzyme A to glucosamine-1-phosphate (GlcN-1-P) to produce N-acetylglucosamine-1-phosphate (GlcNAc-1-P), which is converted into UDP-GlcNAc by the transfer of uridine 5-monophosphate (from uridine 5-triphosphate), a reaction catalyzed by the N-terminal domain. The polypeptide is Bifunctional protein GlmU (Shewanella pealeana (strain ATCC 700345 / ANG-SQ1)).